A 544-amino-acid polypeptide reads, in one-letter code: Glucose starvation modulator protein 1 (544 aa).

A DNA-binding region (zn(2)-C6 fungal-type) is located at residues 20-48 (CVFCHSKHLQCSNERPCKNCMKRNLGDQC). Positions 65 to 93 (KKMKSRTNSISSSYRSPSVSESPQNPYTH) are disordered. Residues 70-86 (RTNSISSSYRSPSVSES) show a composition bias toward low complexity. Positions 403-475 (SLIDYEKLLL…FKLFKSVAVG (73 aa)) constitute a PAS domain.

Belongs to the ERT1/acuK family.

The protein resides in the nucleus. Transcription factor which regulates nonfermentable carbon utilization. This chain is Glucose starvation modulator protein 1 (GSM1), found in Debaryomyces hansenii (strain ATCC 36239 / CBS 767 / BCRC 21394 / JCM 1990 / NBRC 0083 / IGC 2968) (Yeast).